We begin with the raw amino-acid sequence, 309 residues long: Taste receptor type 2 member 46 (309 aa).

A topological domain (extracellular) is located at residue Met1. A helical membrane pass occupies residues 2–22; that stretch reads ITFLPIIFSILIVVTFVIGNF. Residues 23–46 are Cytoplasmic-facing; that stretch reads ANGFIALANSIEWFKRQKISFADQ. The chain crosses the membrane as a helical span at residues 47-67; that stretch reads ILTALAVSRVGLLWVLLLNWY. Over 68-86 the chain is Extracellular; it reads ATELNPAFYSIEVRITAYN. Residues 87–107 traverse the membrane as a helical segment; it reads VWAVISHFSNWLATSLSIFYL. At 108–126 the chain is on the cytoplasmic side; it reads LKIANFSNLIFLRLKRRVK. Residues 127-147 traverse the membrane as a helical segment; sequence SVVLVILLGPLLFLVCHLFVI. Over 148–178 the chain is Extracellular; sequence NMNQIIWTKEYEGNMTWKIKLRSAMYLSDTT. N-linked (GlcNAc...) asparagine glycosylation occurs at Asn161. A helical transmembrane segment spans residues 179–199; that stretch reads VTILANLVPFTLTLISFLLLI. The Cytoplasmic portion of the chain corresponds to 200–229; sequence CSLCKHLKKMQLHGKGSQDPSMKVHIKALQ. A helical membrane pass occupies residues 230–250; the sequence is TVTSFLLLCAIYFLSVIMSVW. Residues 251–259 lie on the Extracellular side of the membrane; that stretch reads SFESLENKP. Residues 260-280 form a helical membrane-spanning segment; that stretch reads VFMFCEAITFSYPSTHPFILI. Residues 281 to 309 lie on the Cytoplasmic side of the membrane; that stretch reads WGNKKLKQTFLSVLWHVRYWVKGEKPSSS.

The protein belongs to the G-protein coupled receptor T2R family.

The protein resides in the membrane. It is found in the cell projection. It localises to the cilium membrane. Receptor that may play a role in the perception of bitterness and is gustducin-linked. May play a role in sensing the chemical composition of the gastrointestinal content. The activity of this receptor may stimulate alpha gustducin, mediate PLC-beta-2 activation and lead to the gating of TRPM5. In airway epithelial cells, binding of bitter compounds increases the intracellular calcium ion concentration and stimulates ciliary beat frequency. The polypeptide is Taste receptor type 2 member 46 (TAS2R46) (Gorilla gorilla gorilla (Western lowland gorilla)).